The following is a 161-amino-acid chain: Lipoprotein signal peptidase (161 aa).

3 helical membrane-spanning segments follow: residues 9 to 29, 63 to 83, and 88 to 108; these read ISLLMTIIVLVFDQVSKWLIT, KMLFFYIITIIILIVLVIFYI, and FNLFMQVAISLLFAGALGNFI. Catalysis depends on residues aspartate 118 and aspartate 136. Residues 131 to 151 traverse the membrane as a helical segment; the sequence is IFNIADSSLTIGVIFVIIALI.

The protein belongs to the peptidase A8 family.

The protein localises to the cell membrane. It catalyses the reaction Release of signal peptides from bacterial membrane prolipoproteins. Hydrolyzes -Xaa-Yaa-Zaa-|-(S,diacylglyceryl)Cys-, in which Xaa is hydrophobic (preferably Leu), and Yaa (Ala or Ser) and Zaa (Gly or Ala) have small, neutral side chains.. Its pathway is protein modification; lipoprotein biosynthesis (signal peptide cleavage). Functionally, this protein specifically catalyzes the removal of signal peptides from prolipoproteins. In Staphylococcus epidermidis (strain ATCC 12228 / FDA PCI 1200), this protein is Lipoprotein signal peptidase.